Here is a 154-residue protein sequence, read N- to C-terminus: SsrA-binding protein (154 aa).

It belongs to the SmpB family.

The protein resides in the cytoplasm. Functionally, required for rescue of stalled ribosomes mediated by trans-translation. Binds to transfer-messenger RNA (tmRNA), required for stable association of tmRNA with ribosomes. tmRNA and SmpB together mimic tRNA shape, replacing the anticodon stem-loop with SmpB. tmRNA is encoded by the ssrA gene; the 2 termini fold to resemble tRNA(Ala) and it encodes a 'tag peptide', a short internal open reading frame. During trans-translation Ala-aminoacylated tmRNA acts like a tRNA, entering the A-site of stalled ribosomes, displacing the stalled mRNA. The ribosome then switches to translate the ORF on the tmRNA; the nascent peptide is terminated with the 'tag peptide' encoded by the tmRNA and targeted for degradation. The ribosome is freed to recommence translation, which seems to be the essential function of trans-translation. In Solidesulfovibrio magneticus (strain ATCC 700980 / DSM 13731 / RS-1) (Desulfovibrio magneticus), this protein is SsrA-binding protein.